The primary structure comprises 296 residues: Bifunctional protein FolD (296 aa).

NADP(+) contacts are provided by residues 166–168 (GRS), Ser191, and Ile232.

This sequence belongs to the tetrahydrofolate dehydrogenase/cyclohydrolase family. As to quaternary structure, homodimer.

It carries out the reaction (6R)-5,10-methylene-5,6,7,8-tetrahydrofolate + NADP(+) = (6R)-5,10-methenyltetrahydrofolate + NADPH. The catalysed reaction is (6R)-5,10-methenyltetrahydrofolate + H2O = (6R)-10-formyltetrahydrofolate + H(+). It participates in one-carbon metabolism; tetrahydrofolate interconversion. Its function is as follows. Catalyzes the oxidation of 5,10-methylenetetrahydrofolate to 5,10-methenyltetrahydrofolate and then the hydrolysis of 5,10-methenyltetrahydrofolate to 10-formyltetrahydrofolate. The polypeptide is Bifunctional protein FolD (Cereibacter sphaeroides (strain ATCC 17029 / ATH 2.4.9) (Rhodobacter sphaeroides)).